The primary structure comprises 694 residues: DNA ligase (694 aa).

Residues 41-45 (DAEFD), 91-92 (SL), and E121 each bind NAD(+). The active-site N6-AMP-lysine intermediate is K123. The NAD(+) site is built by R144, E184, K300, and K324. Residues C418, C421, C437, and C443 each coordinate Zn(2+). One can recognise a BRCT domain in the interval 607–694 (SVLPTCEGLT…QGPPVQQVVD (88 aa)).

This sequence belongs to the NAD-dependent DNA ligase family. LigA subfamily. Mg(2+) is required as a cofactor. The cofactor is Mn(2+).

It carries out the reaction NAD(+) + (deoxyribonucleotide)n-3'-hydroxyl + 5'-phospho-(deoxyribonucleotide)m = (deoxyribonucleotide)n+m + AMP + beta-nicotinamide D-nucleotide.. In terms of biological role, DNA ligase that catalyzes the formation of phosphodiester linkages between 5'-phosphoryl and 3'-hydroxyl groups in double-stranded DNA using NAD as a coenzyme and as the energy source for the reaction. It is essential for DNA replication and repair of damaged DNA. The protein is DNA ligase of Mycobacterium leprae (strain TN).